A 218-amino-acid chain; its full sequence is 3,4-dihydroxy-2-butanone 4-phosphate synthase (218 aa).

D-ribulose 5-phosphate is bound by residues 38-39, Asp-43, 151-155, and Glu-175; these read RE and RRGHT. Glu-39 contacts Mg(2+). Residue His-154 coordinates Mg(2+).

It belongs to the DHBP synthase family. In terms of assembly, homodimer. It depends on Mg(2+) as a cofactor. Requires Mn(2+) as cofactor.

It catalyses the reaction D-ribulose 5-phosphate = (2S)-2-hydroxy-3-oxobutyl phosphate + formate + H(+). Its pathway is cofactor biosynthesis; riboflavin biosynthesis; 2-hydroxy-3-oxobutyl phosphate from D-ribulose 5-phosphate: step 1/1. In terms of biological role, catalyzes the conversion of D-ribulose 5-phosphate to formate and 3,4-dihydroxy-2-butanone 4-phosphate. This chain is 3,4-dihydroxy-2-butanone 4-phosphate synthase, found in Vibrio cholerae serotype O1 (strain ATCC 39541 / Classical Ogawa 395 / O395).